Reading from the N-terminus, the 212-residue chain is Dephospho-CoA kinase (212 aa).

One can recognise a DPCK domain in the interval isoleucine 3 to glycine 204. Glycine 11–threonine 16 provides a ligand contact to ATP.

Belongs to the CoaE family.

The protein resides in the cytoplasm. The enzyme catalyses 3'-dephospho-CoA + ATP = ADP + CoA + H(+). It participates in cofactor biosynthesis; coenzyme A biosynthesis; CoA from (R)-pantothenate: step 5/5. Its function is as follows. Catalyzes the phosphorylation of the 3'-hydroxyl group of dephosphocoenzyme A to form coenzyme A. The protein is Dephospho-CoA kinase of Paramagnetospirillum magneticum (strain ATCC 700264 / AMB-1) (Magnetospirillum magneticum).